The following is a 129-amino-acid chain: Protein yippee-like (129 aa).

Residues 12–109 (KIYSCKHCGT…LERFKITGPD (98 aa)) enclose the Yippee domain. 4 residues coordinate Zn(2+): cysteine 16, cysteine 19, cysteine 72, and cysteine 75.

Belongs to the yippee family.

The sequence is that of Protein yippee-like from Solanum tuberosum (Potato).